The chain runs to 130 residues: Small ribosomal subunit protein uS11 (130 aa).

It belongs to the universal ribosomal protein uS11 family. As to quaternary structure, part of the 30S ribosomal subunit. Interacts with proteins S7 and S18. Binds to IF-3.

In terms of biological role, located on the platform of the 30S subunit, it bridges several disparate RNA helices of the 16S rRNA. Forms part of the Shine-Dalgarno cleft in the 70S ribosome. This Nautilia profundicola (strain ATCC BAA-1463 / DSM 18972 / AmH) protein is Small ribosomal subunit protein uS11.